Here is a 468-residue protein sequence, read N- to C-terminus: Elongation factor 1-alpha (468 aa).

Positions 6–244 (KPHINIVVIG…DNIPLPARPS (239 aa)) constitute a tr-type G domain. Positions 15 to 22 (GHVDSGKS) are G1. 15–22 (GHVDSGKS) is a binding site for GTP. A G2 region spans residues 71–75 (GITID). Residues 92–95 (DAPG) form a G3 region. GTP-binding positions include 92 to 96 (DAPGH) and 154 to 157 (NKID). The segment at 154–157 (NKID) is G4. Positions 195-197 (SGW) are G5. Residues Glu-303 and Glu-376 each carry the 5-glutamyl glycerylphosphorylethanolamine modification.

It belongs to the TRAFAC class translation factor GTPase superfamily. Classic translation factor GTPase family. EF-Tu/EF-1A subfamily.

The protein localises to the cytoplasm. In terms of biological role, this protein promotes the GTP-dependent binding of aminoacyl-tRNA to the A-site of ribosomes during protein biosynthesis. The polypeptide is Elongation factor 1-alpha (Hydra vulgaris (Hydra)).